Here is a 323-residue protein sequence, read N- to C-terminus: MTSYSLPFKSSGKEMAASGELAGKIGLLKKEMNAIVLAHYYTLPEIQQVADVVGDSLALARAAEKNSADVIVFAGVYFMAETAKIINPDKLVLMPDLYAGCPLADSCPVGEFRAFKQRHPDALVITYINSTAEIKSLSDITCTSSNAEHIIRQIPEERTIIFGPDRNLGGYIMKKLGREMLLWQGFCYVHEAFREACILQACRENPQAELIAHPECREEVLRHAAFIGSTQALLDYTVSAPASSFIVATEPGILYEMQRRSPKKQFIAAPKDPENPRSVCKQMKQNTLEKLYQCMLDRSPEIIVPDDLRVLALRPIKKMLEMS.

2 residues coordinate iminosuccinate: H39 and S56. Position 101 (C101) interacts with [4Fe-4S] cluster. Residues 127 to 129 and S144 contribute to the iminosuccinate site; that span reads YIN. C187 contacts [4Fe-4S] cluster. Iminosuccinate-binding positions include 213 to 215 and T230; that span reads HPE. Position 280 (C280) interacts with [4Fe-4S] cluster.

This sequence belongs to the quinolinate synthase family. Type 2 subfamily. [4Fe-4S] cluster serves as cofactor.

The protein resides in the cytoplasm. The enzyme catalyses iminosuccinate + dihydroxyacetone phosphate = quinolinate + phosphate + 2 H2O + H(+). Its pathway is cofactor biosynthesis; NAD(+) biosynthesis; quinolinate from iminoaspartate: step 1/1. Catalyzes the condensation of iminoaspartate with dihydroxyacetone phosphate to form quinolinate. The chain is Quinolinate synthase from Chlorobium phaeobacteroides (strain DSM 266 / SMG 266 / 2430).